Reading from the N-terminus, the 130-residue chain is RutC family protein HI_0719 (130 aa).

Cys109 is a catalytic residue.

This sequence belongs to the RutC family. Homotrimer.

This is RutC family protein HI_0719 from Haemophilus influenzae (strain ATCC 51907 / DSM 11121 / KW20 / Rd).